The primary structure comprises 449 residues: MNNSKSNLLDTEHGDKVAEQMNLASMDCLPDDLLVQILYFLPTKEAISTSLLSKRWRTLYSLVHNLDLDDYIFWHHEDGYNQYFSNDIQKSFEEFMERTLALLGGGHIKTFSLISDEIYRFDHVVDSIRPWLYYNLQKDSLWQFGFPYKVFTSTKLVKLSLGTRLACPRIPQDTSLPVLKVLLLEYIWFEDNQLSDVFLAACPALEDLTIHHMFRPFLISSKNLKKLSVTINFSYYVDRSTILTLDTPNVVDLYYSDFPRPIAPHCHLDSLAKVELDLHSLEDDSRQVQNDADVKNLISEIRNVKTLHLTYSAVELMLSSKKRDWKVLPLLLERSPNLKTLVLSGLNRYTFGRRHRFVGIQIPSSNKIKMLSIKQYQGSATELKHISHLLLKMECLELVKVYLATEMDDLKKMQLTEDVVKLPAASSKIVEKLKAFGAKAVLERVSFLD.

Positions 23-77 (LASMDCLPDDLLVQILYFLPTKEAISTSLLSKRWRTLYSLVHNLDLDDYIFWHHE) constitute an F-box domain. 6 LRR repeats span residues 133–163 (YYNL…SLGT), 186–212 (YIWF…TIHH), 214–231 (FRPF…SVTI), 247–278 (TPNV…ELDL), 286–311 (RQVQ…HLTY), and 320–345 (SKKR…VLSG).

The protein is Putative F-box/LRR-repeat protein At3g44090 of Arabidopsis thaliana (Mouse-ear cress).